The following is a 1193-amino-acid chain: Major DNA-binding protein (1193 aa).

Residues F827–W828 carry the Required for filament formation motif. The tract at residues A1125–A1145 is disordered. A required for nuclear localization region spans residues P1170–L1193.

Belongs to the herpesviridae major DNA-binding protein family. As to quaternary structure, homooligomers. Forms double-helical filaments necessary for the formation of replication compartments within the host nucleus. Interacts with the origin-binding protein. Interacts with the helicase primase complex; this interaction stimulates primer synthesis activity of the helicase-primase complex. Interacts with the DNA polymerase. Interacts with the alkaline exonuclease; this interaction increases its nuclease processivity.

It localises to the host nucleus. Plays several crucial roles in viral infection. Participates in the opening of the viral DNA origin to initiate replication by interacting with the origin-binding protein. May disrupt loops, hairpins and other secondary structures present on ssDNA to reduce and eliminate pausing of viral DNA polymerase at specific sites during elongation. Promotes viral DNA recombination by performing strand-transfer, characterized by the ability to transfer a DNA strand from a linear duplex to a complementary single-stranded DNA circle. Can also catalyze the renaturation of complementary single strands. Additionally, reorganizes the host cell nucleus, leading to the formation of prereplicative sites and replication compartments. This process is driven by the protein which can form double-helical filaments in the absence of DNA. The sequence is that of Major DNA-binding protein from Tupaiid herpesvirus (strain 2) (TuHV-2).